We begin with the raw amino-acid sequence, 350 residues long: Secreted effector protein PipB2 (350 aa).

Pentapeptide repeat domains are found at residues 162 to 201 (ANLTAENLCDADLSGANLEGAVLFMADCEGANFKGANLSG), 202 to 241 (TSLGDSNFKNACLEDSIMCGATLDHANLTGANLQHASLLG), 247 to 286 (CNCSGANMDHTNLSGATLIRADMSGATLQGATIMAAIMED), and 287 to 326 (AVLTRANLRKASFISTNLDGADLAEANLNNTCFKDCTLTH).

As to quaternary structure, interacts with the host kinesin light chain (KLC), a subunit of the kinesin-1 motor complex.

The protein resides in the secreted. It localises to the host membrane. In terms of biological role, effector proteins function to alter host cell physiology and promote bacterial survival in host tissues. Involved in the reorganization of late endosome/lysosome (LE/Lys) compartments in mammalian cells. Necessary and sufficient to link kinesin-1 onto the Salmonella-containing vacuole (SCV) membrane. Required for centrifugal extension of lysosomal glycoprotein-rich membrane tubules, known as Salmonella-induced filaments (Sifs), away from the SCV and toward the cell periphery. Required for virulence, but not for intracellular survival and replication in phagocytic cells. The sequence is that of Secreted effector protein PipB2 (pipB2) from Salmonella choleraesuis (strain SC-B67).